A 200-amino-acid polypeptide reads, in one-letter code: Glutathione S-transferase 1-1 (200 aa).

Positions 1 to 73 (GSSPCRSVIM…YLVEKYGKTD (73 aa)) constitute a GST N-terminal domain. Glutathione-binding positions include serine 2, 43 to 45 (HTI), and 57 to 59 (ESR). Residues 79–200 (CPKKRAVINQ…AGCLEFKKYF (122 aa)) form the GST C-terminal domain.

Belongs to the GST superfamily. Theta family. In terms of assembly, homodimer.

It carries out the reaction RX + glutathione = an S-substituted glutathione + a halide anion + H(+). The enzyme catalyses 1,1,1-trichloro-2,2-bis(4-chlorophenyl)ethane = 1,1-dichloro-2,2-bis(4-chlorophenyl)ethylene + chloride + H(+). Functionally, conjugation of reduced glutathione to a wide number of exogenous and endogenous hydrophobic electrophiles. Has DDT dehydrochlorinase activity. This Drosophila teissieri (Fruit fly) protein is Glutathione S-transferase 1-1 (GstD1).